A 166-amino-acid chain; its full sequence is Cyanate hydratase (166 aa).

Residues R106, E109, and S132 contribute to the active site.

The protein belongs to the cyanase family.

It catalyses the reaction cyanate + hydrogencarbonate + 3 H(+) = NH4(+) + 2 CO2. In terms of biological role, catalyzes the reaction of cyanate with bicarbonate to produce ammonia and carbon dioxide. The sequence is that of Cyanate hydratase from Verticillium alfalfae (strain VaMs.102 / ATCC MYA-4576 / FGSC 10136) (Verticillium wilt of alfalfa).